We begin with the raw amino-acid sequence, 274 residues long: MDWLYSLIYGIVEGITEFLPISSTGHLILTGNLLHVPWPKEVKDTFEVVIQGGAILAVLVYYWRDFLKIRHIGHDRGQQRLWLGVVLACIPAVILGVLFGDTIKAYLFRPSVVAWALIVGGVLMWLLESRKATPDTHDIENISAGKALAIGAAQCLALLWPGFSRSASSILGGMLLGLDRPTATKFSFYLGVPTLGGAALLDFIKSREILAQIGVVNVAIGAVTSFVVAYFAIGWLLRFVSTNNFKGFAVYRVVVGVLILVLIARGVLQNGSLA.

8 helical membrane passes run 1-21 (MDWLYSLIYGIVEGITEFLPI), 42-62 (VKDTFEVVIQGGAILAVLVYY), 81-101 (LWLGVVLACIPAVILGVLFGD), 107-127 (LFRPSVVAWALIVGGVLMWLL), 142-162 (ISAGKALAIGAAQCLALLWPG), 184-204 (TKFSFYLGVPTLGGAALLDFI), 213-233 (IGVVNVAIGAVTSFVVAYFAI), and 248-268 (FAVYRVVVGVLILVLIARGVL).

It belongs to the UppP family.

Its subcellular location is the cell membrane. It catalyses the reaction di-trans,octa-cis-undecaprenyl diphosphate + H2O = di-trans,octa-cis-undecaprenyl phosphate + phosphate + H(+). Catalyzes the dephosphorylation of undecaprenyl diphosphate (UPP). Confers resistance to bacitracin. This is Undecaprenyl-diphosphatase from Deinococcus radiodurans (strain ATCC 13939 / DSM 20539 / JCM 16871 / CCUG 27074 / LMG 4051 / NBRC 15346 / NCIMB 9279 / VKM B-1422 / R1).